Consider the following 446-residue polypeptide: Thymidine phosphorylase (446 aa).

The protein belongs to the thymidine/pyrimidine-nucleoside phosphorylase family. In terms of assembly, homodimer.

The enzyme catalyses thymidine + phosphate = 2-deoxy-alpha-D-ribose 1-phosphate + thymine. It functions in the pathway pyrimidine metabolism; dTMP biosynthesis via salvage pathway; dTMP from thymine: step 1/2. Functionally, the enzymes which catalyze the reversible phosphorolysis of pyrimidine nucleosides are involved in the degradation of these compounds and in their utilization as carbon and energy sources, or in the rescue of pyrimidine bases for nucleotide synthesis. This chain is Thymidine phosphorylase, found in Idiomarina loihiensis (strain ATCC BAA-735 / DSM 15497 / L2-TR).